Reading from the N-terminus, the 393-residue chain is Probable chromate transport protein (393 aa).

Transmembrane regions (helical) follow at residues Y22–H42, A90–A110, W119–A139, T146–V166, F201–L221, A231–V251, Q261–G281, F282–I302, F327–G347, and L370–F390.

This sequence belongs to the chromate ion transporter (CHR) (TC 2.A.51) family.

It is found in the cell membrane. In terms of biological role, may function in the active transport of chromate into the cell under sulfur-deficient conditions. In Synechococcus elongatus (strain ATCC 33912 / PCC 7942 / FACHB-805) (Anacystis nidulans R2), this protein is Probable chromate transport protein (srpC).